Here is a 137-residue protein sequence, read N- to C-terminus: MARVLNVEIPNHKRIVIALCSIFGIGKSLATEIVEKTAKLQEEKFGKKFPILTENTKVKEINEEVLQVIRDVAKTYKTEGDLHREVQSNIKRLIEIKCYRGIRHRKGLPVRGQVTQKNARTRKGPRKTIMAKKDKGK.

The segment at 114–137 (VTQKNARTRKGPRKTIMAKKDKGK) is disordered. Residues 119-130 (ARTRKGPRKTIM) are compositionally biased toward basic residues.

It belongs to the universal ribosomal protein uS13 family. In terms of assembly, part of the 30S ribosomal subunit. Forms a loose heterodimer with protein S19. Forms two bridges to the 50S subunit in the 70S ribosome.

In terms of biological role, located at the top of the head of the 30S subunit, it contacts several helices of the 16S rRNA. In the 70S ribosome it contacts the 23S rRNA (bridge B1a) and protein L5 of the 50S subunit (bridge B1b), connecting the 2 subunits; these bridges are implicated in subunit movement. Contacts the tRNAs in the A and P-sites. The chain is Small ribosomal subunit protein uS13 from Mesomycoplasma hyopneumoniae (strain 232) (Mycoplasma hyopneumoniae).